A 212-amino-acid chain; its full sequence is Dihydrophenazinedicarboxylate synthase (212 aa).

Ser8 contacts substrate. FMN contacts are provided by residues 63-66 (RVIA) and 78-79 (CT). His80 serves as a coordination point for substrate. Residues 84–85 (RK) and Gln107 contribute to the FMN site. The substrate site is built by Arg129 and Ser137. Residues 142–143 (QS) and Arg195 each bind FMN.

This sequence belongs to the pyridoxamine 5'-phosphate oxidase family. Requires FMN as cofactor.

The enzyme catalyses (1R,6R)-1,4,5,5a,6,9-hexahydrophenazine-1,6-dicarboxylate + O2 = (1R,10aS)-1,4,10,10a-tetrahydrophenazine-1,6-dicarboxylate + H2O2. The catalysed reaction is (1R,10aS)-1,4,10,10a-tetrahydrophenazine-1,6-dicarboxylate + O2 = (5aS)-5,5a-dihydrophenazine-1,6-dicarboxylate + H2O2. It carries out the reaction (1R,10aS)-1,4,10,10a-tetrahydrophenazine-1-carboxylate + O2 = (10aS)-10,10a-dihydrophenazine-1-carboxylate + H2O2. It catalyses the reaction (1R)-1,4,5,10-tetrahydrophenazine-1-carboxylate + O2 = (10aS)-10,10a-dihydrophenazine-1-carboxylate + H2O2. It functions in the pathway antibiotic biosynthesis; phenazine biosynthesis. Its function is as follows. Involved in the biosynthesis of the antibiotic phenazine, a nitrogen-containing heterocyclic molecule having important roles in virulence, competition and biological control. Catalyzes several oxidations in the terminal steps of core phenazine biosynthesis. It oxidizes both hexahydrophenazine-1,6-dicarboxylic acid (HHPDC) and tetrahydrophenazine-1-carboxylic acid (THPCA) and thereby contributes to the generation of both phenazine-1,6-dicarboxylic acid (PDC) and phenazine-1-carboxylic acid (PCA). It synthesizes phenazines in their reduced form, which are the likely end products in vivo. This is Dihydrophenazinedicarboxylate synthase from Burkholderia lata (strain ATCC 17760 / DSM 23089 / LMG 22485 / NCIMB 9086 / R18194 / 383).